Consider the following 184-residue polypeptide: Ribulose bisphosphate carboxylase small subunit, chloroplastic 5 (184 aa).

Residues 1–43 (MAAAMMNKTIVVSKDGCARSSSIPKVATNKMGFASAVAMKKSR) constitute a chloroplast transit peptide.

This sequence belongs to the RuBisCO small chain family. In terms of assembly, heterohexadecamer of 8 large and 8 small subunits.

Its subcellular location is the plastid. The protein resides in the chloroplast. RuBisCO catalyzes two reactions: the carboxylation of D-ribulose 1,5-bisphosphate, the primary event in carbon dioxide fixation, as well as the oxidative fragmentation of the pentose substrate. Both reactions occur simultaneously and in competition at the same active site. Although the small subunit is not catalytic it is essential for maximal activity. This chain is Ribulose bisphosphate carboxylase small subunit, chloroplastic 5, found in Acetabularia peniculus (Green alga).